We begin with the raw amino-acid sequence, 179 residues long: NADH dehydrogenase [ubiquinone] 1 beta subcomplex subunit 9 (179 aa).

Position 2 is an N-acetylalanine (Ala2). At Ser85 the chain carries Phosphoserine. Residues 136–162 form a disordered region; it reads EVKQLQEETPPGGPLTEALPPARKEGD.

The protein belongs to the complex I LYR family. In terms of assembly, mammalian complex I is composed of 45 different subunits.

The protein localises to the mitochondrion inner membrane. In terms of biological role, accessory subunit of the mitochondrial membrane respiratory chain NADH dehydrogenase (Complex I), that is believed to be not involved in catalysis. Complex I functions in the transfer of electrons from NADH to the respiratory chain. The immediate electron acceptor for the enzyme is believed to be ubiquinone. In Pongo abelii (Sumatran orangutan), this protein is NADH dehydrogenase [ubiquinone] 1 beta subcomplex subunit 9 (NDUFB9).